We begin with the raw amino-acid sequence, 131 residues long: Nitrogenase-stabilizing/protective protein NifW (131 aa).

Belongs to the NifW family. In terms of assembly, homotrimer; associates with NifD.

Functionally, may protect the nitrogenase Fe-Mo protein from oxidative damage. In Frankia alni (strain DSM 45986 / CECT 9034 / ACN14a), this protein is Nitrogenase-stabilizing/protective protein NifW.